A 384-amino-acid polypeptide reads, in one-letter code: Putative sarcosine oxidase (384 aa).

Aspartate 6–phenylalanine 36 provides a ligand contact to FAD. An S-8alpha-FAD cysteine modification is found at cysteine 315.

It belongs to the MSOX/MTOX family. Requires FAD as cofactor.

The enzyme catalyses sarcosine + O2 + H2O = formaldehyde + glycine + H2O2. In Caenorhabditis elegans, this protein is Putative sarcosine oxidase.